The chain runs to 539 residues: Chaperonin GroEL (539 aa).

Residues 29–32 (TLGP), 86–90 (DGTTT), Gly-413, 477–479 (DAL), and Asp-493 contribute to the ATP site.

This sequence belongs to the chaperonin (HSP60) family. As to quaternary structure, forms a cylinder of 14 subunits composed of two heptameric rings stacked back-to-back. Interacts with the co-chaperonin GroES.

The protein localises to the cytoplasm. The catalysed reaction is ATP + H2O + a folded polypeptide = ADP + phosphate + an unfolded polypeptide.. Functionally, together with its co-chaperonin GroES, plays an essential role in assisting protein folding. The GroEL-GroES system forms a nano-cage that allows encapsulation of the non-native substrate proteins and provides a physical environment optimized to promote and accelerate protein folding. The sequence is that of Chaperonin GroEL from Clostridium perfringens (strain 13 / Type A).